The chain runs to 125 residues: Glucose-1-phosphate adenylyltransferase small subunit (125 aa).

Belongs to the bacterial/plant glucose-1-phosphate adenylyltransferase family. Heterotetramer. As to expression, leaves.

It localises to the plastid. It is found in the chloroplast. The protein localises to the amyloplast. It carries out the reaction alpha-D-glucose 1-phosphate + ATP + H(+) = ADP-alpha-D-glucose + diphosphate. It functions in the pathway glycan biosynthesis; starch biosynthesis. Activated by 3'phosphoglycerate, inhibited by orthophosphate. Allosteric regulation. This protein plays a role in synthesis of starch. It catalyzes the synthesis of the activated glycosyl donor, ADP-glucose from Glc-1-P and ATP. The chain is Glucose-1-phosphate adenylyltransferase small subunit (GLG1) from Zea mays (Maize).